A 491-amino-acid polypeptide reads, in one-letter code: Keratin, type I cytoskeletal 39 (491 aa).

The head stretch occupies residues 1-96; sequence MDTKGCTTTN…WYGEGINSNE (96 aa). The IF rod domain occupies 96–407; sequence EKETMQILNE…SLLESSDGKR (312 aa). The tract at residues 97 to 131 is coil 1A; it reads KETMQILNERLANYLQKVRMLERENAELESKIQEE. The segment at 132–142 is linker 1; sequence SNKELPVLCPD. The segment at 143–243 is coil 1B; the sequence is YLSYYTTIEE…HKEEINSLQC (101 aa). Residues 244-259 form a linker 12 region; it reads QLGERLDIEVTAAPSA. The interval 260–403 is coil 2; it reads DLNQVLQEMR…TTYRSLLESS (144 aa). The tract at residues 404-491 is tail; sequence DGKRPCYPRA…PCFIIRPAKV (88 aa).

This sequence belongs to the intermediate filament family. As to quaternary structure, heterotetramer of two type I and two type II keratins. Expressed in skin and scalp. In the hair follicle, it is present in the upper hair cuticle and the upper cortex. Also present in the in the upper portion of beard hairs (at protein level).

In terms of biological role, may play a role in late hair differentiation. This chain is Keratin, type I cytoskeletal 39 (KRT39), found in Homo sapiens (Human).